The following is a 70-amino-acid chain: Cold shock-like protein CspA (70 aa).

The CSD domain occupies 7-67 (GSVKWFNETK…GKKGPQAAQV (61 aa)).

It is found in the cytoplasm. This Vibrio cholerae serotype O1 (strain ATCC 39315 / El Tor Inaba N16961) protein is Cold shock-like protein CspA (cspA).